A 314-amino-acid chain; its full sequence is Fibrinogen-like protein 1 (314 aa).

The N-terminal stretch at 1–22 is a signal peptide; sequence MGKIYSFVLVAIALMMGREGWA. Residues 28-62 are a coiled coil; sequence CLREQVRLRAQVHQLETRVKQQQTMIAQLLHEKEV. Residues 76 to 308 enclose the Fibrinogen C-terminal domain; sequence LGGKRQYADC…SVVMKIRPSD (233 aa). 2 cysteine pairs are disulfide-bonded: Cys85/Cys114 and Cys250/Cys263.

Homodimer. Interacts (via the Fibrinogen C-terminal domain) with LAG3 (via Ig-like domains 1 and 2). In terms of tissue distribution, mainly expressed in liver. Also expressed in brown adipose tissue.

The protein resides in the secreted. Functionally, immune suppressive molecule that inhibits antigen-specific T-cell activation by acting as a major ligand of LAG3. Responsible for LAG3 T-cell inhibitory function. Binds LAG3 independently from MHC class II (MHC-II). Secreted by, and promotes growth of, hepatocytes. The polypeptide is Fibrinogen-like protein 1 (Fgl1) (Mus musculus (Mouse)).